The primary structure comprises 280 residues: Phosphatidylglycerol--prolipoprotein diacylglyceryl transferase (280 aa).

Helical transmembrane passes span 23 to 43 (LRWY…LAGV), 58 to 78 (LLFW…VLFY), 93 to 113 (IWTG…ALWW), and 120 to 140 (CTFL…LGAG). Residue R141 participates in a 1,2-diacyl-sn-glycero-3-phospho-(1'-sn-glycerol) binding. 3 consecutive transmembrane segments (helical) span residues 173–193 (PSQL…LWLY), 200–220 (IGAV…FVEF), and 241–261 (QGQI…VWAV).

The protein belongs to the Lgt family.

It is found in the cell inner membrane. The catalysed reaction is L-cysteinyl-[prolipoprotein] + a 1,2-diacyl-sn-glycero-3-phospho-(1'-sn-glycerol) = an S-1,2-diacyl-sn-glyceryl-L-cysteinyl-[prolipoprotein] + sn-glycerol 1-phosphate + H(+). The protein operates within protein modification; lipoprotein biosynthesis (diacylglyceryl transfer). Catalyzes the transfer of the diacylglyceryl group from phosphatidylglycerol to the sulfhydryl group of the N-terminal cysteine of a prolipoprotein, the first step in the formation of mature lipoproteins. This is Phosphatidylglycerol--prolipoprotein diacylglyceryl transferase from Pseudoalteromonas atlantica (strain T6c / ATCC BAA-1087).